Reading from the N-terminus, the 147-residue chain is Cyanate hydratase (147 aa).

Residues R88, E91, and S114 contribute to the active site.

This sequence belongs to the cyanase family.

It carries out the reaction cyanate + hydrogencarbonate + 3 H(+) = NH4(+) + 2 CO2. In terms of biological role, catalyzes the reaction of cyanate with bicarbonate to produce ammonia and carbon dioxide. The protein is Cyanate hydratase of Albidiferax ferrireducens (strain ATCC BAA-621 / DSM 15236 / T118) (Rhodoferax ferrireducens).